We begin with the raw amino-acid sequence, 128 residues long: Large ribosomal subunit protein uL22 (128 aa).

This sequence belongs to the universal ribosomal protein uL22 family. As to quaternary structure, part of the 50S ribosomal subunit.

This protein binds specifically to 23S rRNA; its binding is stimulated by other ribosomal proteins, e.g. L4, L17, and L20. It is important during the early stages of 50S assembly. It makes multiple contacts with different domains of the 23S rRNA in the assembled 50S subunit and ribosome. In terms of biological role, the globular domain of the protein is located near the polypeptide exit tunnel on the outside of the subunit, while an extended beta-hairpin is found that lines the wall of the exit tunnel in the center of the 70S ribosome. The polypeptide is Large ribosomal subunit protein uL22 (Nitrobacter hamburgensis (strain DSM 10229 / NCIMB 13809 / X14)).